The sequence spans 459 residues: Putrescine aminotransferase (459 aa).

Pyridoxal 5'-phosphate contacts are provided by residues 150–151 (GT) and Gln274. N6-(pyridoxal phosphate)lysine is present on Lys300. Thr332 is a pyridoxal 5'-phosphate binding site.

The protein belongs to the class-III pyridoxal-phosphate-dependent aminotransferase family. Putrescine aminotransferase subfamily. Pyridoxal 5'-phosphate serves as cofactor.

It carries out the reaction an alkane-alpha,omega-diamine + 2-oxoglutarate = an omega-aminoaldehyde + L-glutamate. The enzyme catalyses putrescine + 2-oxoglutarate = 1-pyrroline + L-glutamate + H2O. The catalysed reaction is cadaverine + 2-oxoglutarate = 5-aminopentanal + L-glutamate. The protein operates within amine and polyamine degradation; putrescine degradation; 4-aminobutanal from putrescine (transaminase route): step 1/1. Catalyzes the aminotransferase reaction from putrescine to 2-oxoglutarate, leading to glutamate and 4-aminobutanal, which spontaneously cyclizes to form 1-pyrroline. This is the first step in one of two pathways for putrescine degradation, where putrescine is converted into 4-aminobutanoate (gamma-aminobutyrate or GABA) via 4-aminobutanal. Also functions as a cadaverine transaminase in a a L-lysine degradation pathway to succinate that proceeds via cadaverine, glutarate and L-2-hydroxyglutarate. The polypeptide is Putrescine aminotransferase (Shigella flexneri serotype 5b (strain 8401)).